A 293-amino-acid polypeptide reads, in one-letter code: Formamidopyrimidine-DNA glycosylase (293 aa).

The Schiff-base intermediate with DNA role is filled by Pro-2. Glu-3 (proton donor) is an active-site residue. The active-site Proton donor; for beta-elimination activity is the Lys-58. DNA-binding residues include His-104, Arg-123, and Lys-166. The FPG-type zinc-finger motif lies at 257–293; it reads KVYDREGETCKTPACGGTIKRFTQNGRSTFWCPKCQK. Arg-283 serves as the catalytic Proton donor; for delta-elimination activity.

It belongs to the FPG family. As to quaternary structure, monomer. Zn(2+) serves as cofactor.

The enzyme catalyses Hydrolysis of DNA containing ring-opened 7-methylguanine residues, releasing 2,6-diamino-4-hydroxy-5-(N-methyl)formamidopyrimidine.. It catalyses the reaction 2'-deoxyribonucleotide-(2'-deoxyribose 5'-phosphate)-2'-deoxyribonucleotide-DNA = a 3'-end 2'-deoxyribonucleotide-(2,3-dehydro-2,3-deoxyribose 5'-phosphate)-DNA + a 5'-end 5'-phospho-2'-deoxyribonucleoside-DNA + H(+). Its function is as follows. Involved in base excision repair of DNA damaged by oxidation or by mutagenic agents. Acts as a DNA glycosylase that recognizes and removes damaged bases. Has a preference for oxidized purines, such as 7,8-dihydro-8-oxoguanine (8-oxoG). Has AP (apurinic/apyrimidinic) lyase activity and introduces nicks in the DNA strand. Cleaves the DNA backbone by beta-delta elimination to generate a single-strand break at the site of the removed base with both 3'- and 5'-phosphates. This is Formamidopyrimidine-DNA glycosylase from Bradyrhizobium diazoefficiens (strain JCM 10833 / BCRC 13528 / IAM 13628 / NBRC 14792 / USDA 110).